Reading from the N-terminus, the 106-residue chain is Iron-sulfur cluster assembly protein CyaY (106 aa).

Belongs to the frataxin family.

In terms of biological role, involved in iron-sulfur (Fe-S) cluster assembly. May act as a regulator of Fe-S biogenesis. This Pectobacterium carotovorum subsp. carotovorum (strain PC1) protein is Iron-sulfur cluster assembly protein CyaY.